The following is a 32-amino-acid chain: Photosystem II reaction center protein T (32 aa).

Residue methionine 1 is modified to N-formylmethionine. Residues 1–2 lie on the Lumenal side of the membrane; that stretch reads ME. A helical transmembrane segment spans residues 3–23; it reads TITYVFIFACIIALFFFAIFF. At 24–32 the chain is on the cytoplasmic side; that stretch reads REPPRITKK.

The protein belongs to the PsbT family. As to quaternary structure, PSII is composed of 1 copy each of membrane proteins PsbA, PsbB, PsbC, PsbD, PsbE, PsbF, PsbH, PsbI, PsbJ, PsbK, PsbL, PsbM, PsbT, PsbX, PsbY, PsbZ, Psb30/Ycf12, PsbO, CyanoQ (PsbQ), PsbU, PsbV and a large number of cofactors. It forms dimeric complexes. Part of a photosystem II (PSII) assembly intermediate complex PSII-I; crystallized from a strain deleted of psbJ, it forms monomeric PSII before addition of the oxygen evolving complex. PSII-I includes 3 assembly factors not found in mature PSII (Psb27, Psb28 and Psb34). PSII binds multiple chlorophylls, carotenoids and specific lipids. is required as a cofactor.

The protein resides in the cellular thylakoid membrane. Its function is as follows. Found at the monomer-monomer interface of the photosystem II (PS II) dimer, plays a role in assembly and dimerization of PSII. PSII is a light-driven water plastoquinone oxidoreductase, using light energy to abstract electrons from H(2)O, generating a proton gradient subsequently used for ATP formation. The chain is Photosystem II reaction center protein T from Thermosynechococcus vestitus (strain NIES-2133 / IAM M-273 / BP-1).